The chain runs to 131 residues: Holo-[acyl-carrier-protein] synthase (131 aa).

Aspartate 8 and glutamate 59 together coordinate Mg(2+).

Belongs to the P-Pant transferase superfamily. AcpS family. Requires Mg(2+) as cofactor.

Its subcellular location is the cytoplasm. It catalyses the reaction apo-[ACP] + CoA = holo-[ACP] + adenosine 3',5'-bisphosphate + H(+). Functionally, transfers the 4'-phosphopantetheine moiety from coenzyme A to a Ser of acyl-carrier-protein. The polypeptide is Holo-[acyl-carrier-protein] synthase (Orientia tsutsugamushi (strain Boryong) (Rickettsia tsutsugamushi)).